Consider the following 2417-residue polypeptide: Protein pad-1 (2417 aa).

Disordered stretches follow at residues 409 to 437 (SSNS…DREG), 449 to 475 (SNKD…PDEE), 994 to 1029 (TSTG…DDDT), and 1957 to 2032 (SMSN…RRDP). Composition is skewed to low complexity over residues 456 to 468 (TSVT…NASS) and 1002 to 1024 (DPSA…VVPA). The span at 1969–1982 (DNPSGSTRNSTLSL) shows a compositional bias: polar residues. The span at 2003–2014 (SKSENMKIEKKS) shows a compositional bias: basic and acidic residues. Positions 2015–2025 (SSNLRASIKDT) are enriched in polar residues.

This sequence belongs to the DOP1 family.

Functionally, may be involved in protein traffic between late Golgi and early endosomes. Essential for cell patterning during gastrulation. This Caenorhabditis elegans protein is Protein pad-1 (pad-1).